The sequence spans 171 residues: NADH-quinone oxidoreductase subunit B (171 aa).

Positions 39, 40, 105, and 134 each coordinate [4Fe-4S] cluster.

It belongs to the complex I 20 kDa subunit family. NDH-1 is composed of 14 different subunits. Subunits NuoB, C, D, E, F, and G constitute the peripheral sector of the complex. [4Fe-4S] cluster serves as cofactor.

Its subcellular location is the cell inner membrane. The catalysed reaction is a quinone + NADH + 5 H(+)(in) = a quinol + NAD(+) + 4 H(+)(out). In terms of biological role, NDH-1 shuttles electrons from NADH, via FMN and iron-sulfur (Fe-S) centers, to quinones in the respiratory chain. The immediate electron acceptor for the enzyme in this species is believed to be ubiquinone. Couples the redox reaction to proton translocation (for every two electrons transferred, four hydrogen ions are translocated across the cytoplasmic membrane), and thus conserves the redox energy in a proton gradient. The chain is NADH-quinone oxidoreductase subunit B from Aliarcobacter butzleri (strain RM4018) (Arcobacter butzleri).